A 756-amino-acid chain; its full sequence is Polyribonucleotide nucleotidyltransferase (756 aa).

2 residues coordinate Mg(2+): aspartate 547 and aspartate 553. Residues 613-672 form the KH domain; that stretch reads PRITSVTIPVNKIGELIGPKGKTINAITEETGADVSIEEDGTVYISAATGEAADAAIDRV. One can recognise an S1 motif domain in the interval 684–753; the sequence is GERFLGTVVK…NRGKISLVPV (70 aa).

It belongs to the polyribonucleotide nucleotidyltransferase family. Mg(2+) serves as cofactor.

The protein localises to the cytoplasm. It carries out the reaction RNA(n+1) + phosphate = RNA(n) + a ribonucleoside 5'-diphosphate. Its function is as follows. Involved in mRNA degradation. Catalyzes the phosphorolysis of single-stranded polyribonucleotides processively in the 3'- to 5'-direction. The sequence is that of Polyribonucleotide nucleotidyltransferase from Corynebacterium aurimucosum (strain ATCC 700975 / DSM 44827 / CIP 107346 / CN-1) (Corynebacterium nigricans).